The sequence spans 431 residues: Glutamate-1-semialdehyde 2,1-aminomutase (431 aa).

The residue at position 265 (K265) is an N6-(pyridoxal phosphate)lysine.

Belongs to the class-III pyridoxal-phosphate-dependent aminotransferase family. HemL subfamily. Homodimer. Requires pyridoxal 5'-phosphate as cofactor.

Its subcellular location is the cytoplasm. The catalysed reaction is (S)-4-amino-5-oxopentanoate = 5-aminolevulinate. The protein operates within porphyrin-containing compound metabolism; protoporphyrin-IX biosynthesis; 5-aminolevulinate from L-glutamyl-tRNA(Glu): step 2/2. In Vibrio vulnificus (strain CMCP6), this protein is Glutamate-1-semialdehyde 2,1-aminomutase.